We begin with the raw amino-acid sequence, 76 residues long: Exodeoxyribonuclease 7 small subunit (76 aa).

Belongs to the XseB family. As to quaternary structure, heterooligomer composed of large and small subunits.

Its subcellular location is the cytoplasm. It carries out the reaction Exonucleolytic cleavage in either 5'- to 3'- or 3'- to 5'-direction to yield nucleoside 5'-phosphates.. Functionally, bidirectionally degrades single-stranded DNA into large acid-insoluble oligonucleotides, which are then degraded further into small acid-soluble oligonucleotides. The protein is Exodeoxyribonuclease 7 small subunit of Staphylococcus aureus (strain MRSA252).